Here is a 355-residue protein sequence, read N- to C-terminus: Dihydroorotate dehydrogenase (quinone) (355 aa).

FMN contacts are provided by residues 68–72 and Thr-92; that span reads AGFDK. Residue Lys-72 coordinates substrate. Residue 117–121 coordinates substrate; it reads NRMGF. The FMN site is built by Asn-154 and Asn-190. Residue Asn-190 participates in substrate binding. The active-site Nucleophile is Ser-193. Asn-195 contacts substrate. Lys-232 and Thr-260 together coordinate FMN. 261 to 262 is a binding site for substrate; sequence NT. FMN contacts are provided by residues Gly-286, Gly-315, and 336 to 337; that span reads YS.

This sequence belongs to the dihydroorotate dehydrogenase family. Type 2 subfamily. In terms of assembly, monomer. Requires FMN as cofactor.

Its subcellular location is the cell membrane. The catalysed reaction is (S)-dihydroorotate + a quinone = orotate + a quinol. The protein operates within pyrimidine metabolism; UMP biosynthesis via de novo pathway; orotate from (S)-dihydroorotate (quinone route): step 1/1. Its function is as follows. Catalyzes the conversion of dihydroorotate to orotate with quinone as electron acceptor. In Nocardioides sp. (strain ATCC BAA-499 / JS614), this protein is Dihydroorotate dehydrogenase (quinone).